Consider the following 1031-residue polypeptide: Serine-repeat antigen protein 6 (1031 aa).

An N-terminal signal peptide occupies residues 1 to 24 (MICPIFFLYIINVLFTQYFIKCEG). Asparagine 74 is a glycosylation site (N-linked (GlcNAc...) asparagine). Over residues 91-101 (KVVSSSESGKG) the composition is skewed to low complexity. Residues 91–163 (KVVSSSESGK…TESSSETLNK (73 aa)) are disordered. Residues 104–139 (VSHTKVTSEGLSDTQPNVTQSVSSSTHTPGSLDSTM) show a composition bias toward polar residues. The N-linked (GlcNAc...) asparagine glycan is linked to asparagine 120. A compositionally biased stretch (low complexity) spans 140–158 (STEQHSSVSQSSLPTESSS). An N-linked (GlcNAc...) asparagine glycan is attached at asparagine 449. The interval 490–567 (TLPSESPSES…GDTNYVYDFD (78 aa)) is disordered. Over residues 492-505 (PSESPSESSSKSDS) the composition is skewed to low complexity. The segment covering 511-535 (NDKDKNEDKDDMSKNSKEEFKNDDK) has biased composition (basic and acidic residues). A glycan (N-linked (GlcNAc...) asparagine) is linked at asparagine 544. Residues 554 to 564 (NINNGDTNYVY) are compositionally biased toward low complexity. N-linked (GlcNAc...) asparagine glycosylation occurs at asparagine 573. Cysteine 644 is a catalytic residue. N-linked (GlcNAc...) asparagine glycosylation is present at asparagine 674. Residues histidine 810 and asparagine 835 contribute to the active site. Asparagine 929 and asparagine 974 each carry an N-linked (GlcNAc...) asparagine glycan.

It belongs to the peptidase C1 family. Post-translationally, just prior to merozoite egress from host erythrocytes, proteolytically cleaved by SUB1 to generate the active 75kDa form.

Its subcellular location is the parasitophorous vacuole lumen. The protein resides in the parasitophorous vacuole membrane. Its function is as follows. Cysteine protease which plays an essential role in merozoite egress from host erythrocytes. May cleave host SPTB/beta spectrin and ANK1/ankyrin-1 which disrupts host erythrocyte actin cytoskeleton and leads to host erythrocyte cell membrane rupture. This chain is Serine-repeat antigen protein 6, found in Plasmodium falciparum (isolate 3D7).